The sequence spans 392 residues: GTPase Obg (392 aa).

The Obg domain maps to 1–159 (MKFVDEAEIR…RNLKLELMLL (159 aa)). The interval 121–146 (GFHGLGNTRFKSSTNRAPRQKTNGTP) is disordered. Polar residues predominate over residues 129 to 145 (RFKSSTNRAPRQKTNGT). Residues 160-333 (ADVGLLGMPN…LCNDVMDFIE (174 aa)) form the OBG-type G domain. GTP contacts are provided by residues 166 to 173 (GMPNAGKS), 191 to 195 (FTTLV), 213 to 216 (DIPG), 283 to 286 (NKVD), and 314 to 316 (SAF). S173 and T193 together coordinate Mg(2+).

The protein belongs to the TRAFAC class OBG-HflX-like GTPase superfamily. OBG GTPase family. As to quaternary structure, monomer. It depends on Mg(2+) as a cofactor.

Its subcellular location is the cytoplasm. In terms of biological role, an essential GTPase which binds GTP, GDP and possibly (p)ppGpp with moderate affinity, with high nucleotide exchange rates and a fairly low GTP hydrolysis rate. Plays a role in control of the cell cycle, stress response, ribosome biogenesis and in those bacteria that undergo differentiation, in morphogenesis control. This Alteromonas mediterranea (strain DSM 17117 / CIP 110805 / LMG 28347 / Deep ecotype) protein is GTPase Obg.